Reading from the N-terminus, the 214-residue chain is Probable nicotinate-nucleotide adenylyltransferase (214 aa).

Belongs to the NadD family.

The enzyme catalyses nicotinate beta-D-ribonucleotide + ATP + H(+) = deamido-NAD(+) + diphosphate. It functions in the pathway cofactor biosynthesis; NAD(+) biosynthesis; deamido-NAD(+) from nicotinate D-ribonucleotide: step 1/1. Functionally, catalyzes the reversible adenylation of nicotinate mononucleotide (NaMN) to nicotinic acid adenine dinucleotide (NaAD). In Psychromonas ingrahamii (strain DSM 17664 / CCUG 51855 / 37), this protein is Probable nicotinate-nucleotide adenylyltransferase.